The primary structure comprises 483 residues: Glutamyl-tRNA(Gln) amidotransferase subunit A (483 aa).

Catalysis depends on charge relay system residues K76 and S151. S175 (acyl-ester intermediate) is an active-site residue.

Belongs to the amidase family. GatA subfamily. In terms of assembly, heterotrimer of A, B and C subunits.

It carries out the reaction L-glutamyl-tRNA(Gln) + L-glutamine + ATP + H2O = L-glutaminyl-tRNA(Gln) + L-glutamate + ADP + phosphate + H(+). Its function is as follows. Allows the formation of correctly charged Gln-tRNA(Gln) through the transamidation of misacylated Glu-tRNA(Gln) in organisms which lack glutaminyl-tRNA synthetase. The reaction takes place in the presence of glutamine and ATP through an activated gamma-phospho-Glu-tRNA(Gln). This is Glutamyl-tRNA(Gln) amidotransferase subunit A from Pseudomonas entomophila (strain L48).